Here is a 25-residue protein sequence, read N- to C-terminus: MNEQSMKPYVIGLDLGGTNSVFGIV.

The protein belongs to the ROK (NagC/XylR) family. In terms of assembly, homodimer.

The enzyme catalyses D-glucose + ATP = D-glucose 6-phosphate + ADP + H(+). It carries out the reaction D-mannose + ATP = D-mannose 6-phosphate + ADP + H(+). It participates in carbohydrate degradation; glycolysis; D-glyceraldehyde 3-phosphate and glycerone phosphate from D-glucose: step 1/4. The protein operates within carbohydrate metabolism; mannose metabolism. Its activity is regulated as follows. Competitively inhibited by 2-deoxy-glucose. Functionally, the enzyme has great affinity for glucose and mannose. The protein is Glucomannokinase of Segatella bryantii (Prevotella bryantii).